The chain runs to 297 residues: Transmembrane protein 178A (297 aa).

The signal sequence occupies residues 1 to 25 (MEPRALVTALSLGLSLCSLGLLVTA). Residues 26–179 (IFTDHWYETD…LLHLRRITAG (154 aa)) lie on the Extracellular side of the membrane. The span at 41 to 57 (ESCERSRAGADPPDQKN) shows a compositional bias: basic and acidic residues. The disordered stretch occupies residues 41 to 86 (ESCERSRAGADPPDQKNRLMPLSHLPLRDSPPLGRRLLPGGPGRSD). The segment covering 68-79 (RDSPPLGRRLLP) has biased composition (low complexity). N-linked (GlcNAc...) asparagine glycosylation is present at asparagine 158. Residues 180 to 200 (FLGMAVAVLLCGCIVATVSFF) form a helical membrane-spanning segment. The Cytoplasmic segment spans residues 201-208 (WEESLTQH). The chain crosses the membrane as a helical span at residues 209–229 (VAGLLFLMTGIFCTISLCTYA). Residues 230–257 (ASVSYDLNRVPKLIYSLPHDVEHGYSWS) lie on the Extracellular side of the membrane. Residues 258-278 (IFCAWCSLGFIVAAGGLCIAY) form a helical membrane-spanning segment. Over 279–297 (PFISRTKIAHLKSGRDSTV) the chain is Cytoplasmic.

Belongs to the TMEM178 family. In terms of assembly, interacts with STIM1.

The protein resides in the endoplasmic reticulum membrane. Acts as a negative regulator of osteoclast differentiation in basal and inflammatory conditions by regulating TNFSF11-induced Ca (2+) fluxes, thereby controlling the induction of NFATC1. This is Transmembrane protein 178A (Tmem178a) from Rattus norvegicus (Rat).